Consider the following 52-residue polypeptide: UPF0181 protein NTHI1697 (52 aa).

This sequence belongs to the UPF0181 family.

This chain is UPF0181 protein NTHI1697, found in Haemophilus influenzae (strain 86-028NP).